Reading from the N-terminus, the 346-residue chain is Lysyl aminopeptidase (346 aa).

The Zn(2+) site is built by histidine 63 and aspartate 177. The Proton acceptor role is filled by glutamate 207. The Zn(2+) site is built by glutamate 208, aspartate 230, and histidine 314.

As to quaternary structure, homotetramer. Zn(2+) is required as a cofactor.

It carries out the reaction Preferentially, release of N-terminal lysine.. Its function is as follows. Hydrolyzes di-, tri- and tetrapeptides with a lysine as the N-terminal amino acid and with Gly, Lys, Ala, Phe or Glu in the second position. The sequence is that of Lysyl aminopeptidase from Pyrococcus furiosus (strain ATCC 43587 / DSM 3638 / JCM 8422 / Vc1).